A 184-amino-acid polypeptide reads, in one-letter code: Probable RNA 2'-phosphotransferase (184 aa).

Belongs to the KptA/TPT1 family.

Removes the 2'-phosphate from RNA via an intermediate in which the phosphate is ADP-ribosylated by NAD followed by a presumed transesterification to release the RNA and generate ADP-ribose 1''-2''-cyclic phosphate (APPR&gt;P). May function as an ADP-ribosylase. The sequence is that of Probable RNA 2'-phosphotransferase from Escherichia coli (strain 55989 / EAEC).